The sequence spans 359 residues: Fructose-bisphosphate aldolase (359 aa).

Residue Thr-11 is modified to Phosphothreonine. Lys-27 participates in a covalent cross-link: Glycyl lysine isopeptide (Lys-Gly) (interchain with G-Cter in ubiquitin). A phosphoserine mark is found at Ser-56 and Ser-63. Ser-63 provides a ligand contact to D-glyceraldehyde 3-phosphate. A Glycyl lysine isopeptide (Lys-Gly) (interchain with G-Cter in ubiquitin) cross-link involves residue Lys-73. Phosphoserine is present on residues Ser-76 and Ser-83. Lys-85 is covalently cross-linked (Glycyl lysine isopeptide (Lys-Gly) (interchain with G-Cter in ubiquitin)). The residue at position 96 (Ser-96) is a Phosphoserine. Residue Asp-110 is the Proton donor of the active site. 2 residues coordinate Zn(2+): His-111 and Asp-145. Residue Ser-147 is modified to Phosphoserine. Thr-150 carries the phosphothreonine modification. Position 175 (Glu-175) interacts with Zn(2+). Phosphothreonine is present on Thr-179. His-227 provides a ligand contact to Zn(2+). Gly-228 lines the dihydroxyacetone phosphate pocket. A Zn(2+)-binding site is contributed by His-265. Residues 266 to 268 (GGS) and 287 to 290 (NLDT) contribute to the dihydroxyacetone phosphate site. At Ser-268 the chain carries Phosphoserine. Thr-290 carries the phosphothreonine modification. Lys-308 is covalently cross-linked (Glycyl lysine isopeptide (Lys-Gly) (interchain with G-Cter in ubiquitin)). A Phosphotyrosine modification is found at Tyr-310. A Phosphoserine modification is found at Ser-313.

This sequence belongs to the class II fructose-bisphosphate aldolase family. Homodimer. It depends on Zn(2+) as a cofactor.

The enzyme catalyses beta-D-fructose 1,6-bisphosphate = D-glyceraldehyde 3-phosphate + dihydroxyacetone phosphate. It participates in carbohydrate degradation; glycolysis; D-glyceraldehyde 3-phosphate and glycerone phosphate from D-glucose: step 4/4. In terms of biological role, catalyzes the aldol condensation of dihydroxyacetone phosphate (DHAP or glycerone-phosphate) with glyceraldehyde 3-phosphate (G3P) to form fructose 1,6-bisphosphate (FBP) in gluconeogenesis and the reverse reaction in glycolysis. This Saccharomyces cerevisiae (strain ATCC 204508 / S288c) (Baker's yeast) protein is Fructose-bisphosphate aldolase (FBA1).